Reading from the N-terminus, the 474-residue chain is MTKLSIEPVTRVEGHGKVTLSFDDSGKLDKVNFHVVEVRGFEKFLEGRYIEDAPIFTPRICGICQVSHHLASAKAVDNVFGVKIPETANMLRNLIHQASNVHSHALHFGMLASPDLMFPTTDDALKRNLLGVAGENMDMIKDSIAMRKVGQTIVQKVGGRAIHPVTAIVGGQSKPLTEEERDELLTLSDNLVETAERTLNVGKEMVENLKEKDLMNLGYFESYHMGLVNNGAQDIYEGNIRVVNSEGKIEYEFDPAEYANYITEGVRPYSYLKFLALLKRRGEGKGAYRVNTLSRLNVCDKMPTPIAQKYYEEFVKTYGKPAHQPMLFHYARLIELLSSSELIRKFLEDDKIVDTDVRAEVDPKNITGEGVGCVEAPRGTLIHHFKTDDRGIINDTNLVVATVQNNPAMDIGVQKVAEKYIKTPEVAKPHILNHMEMVIRAYDPCLSCATHTIGEEPKILSIHVCQGGKLIKTL.

4 residues coordinate Ni(2+): C61, C64, C445, and C448.

Belongs to the [NiFe]/[NiFeSe] hydrogenase large subunit family. As to quaternary structure, the F420-non-reducing hydrogenase vhc is composed of three subunits; VhcA, VhcD and VhcG. Ni(2+) serves as cofactor.

The sequence is that of F420-non-reducing hydrogenase vhc subunit A (vhcA) from Methanococcus voltae.